The primary structure comprises 421 residues: Type II methyltransferase M.TaqI (421 aa).

The span at 1–18 (MGLPPLLSLPSNSAPRSL) shows a compositional bias: low complexity. Residues 1–20 (MGLPPLLSLPSNSAPRSLGR) form a disordered region. Residues T23, 45–48 (EPAC), E71, D89, and P107 contribute to the S-adenosyl-L-methionine site.

Belongs to the N(4)/N(6)-methyltransferase family.

The catalysed reaction is a 2'-deoxyadenosine in DNA + S-adenosyl-L-methionine = an N(6)-methyl-2'-deoxyadenosine in DNA + S-adenosyl-L-homocysteine + H(+). A gamma subtype methylase that recognizes the double-stranded sequence 5'-TCGA-3', methylates A-4 on both strands and protects the DNA from cleavage by the TaqI endonuclease. The chain is Type II methyltransferase M.TaqI (taqIM) from Thermus aquaticus.